The chain runs to 1331 residues: Lysine-specific demethylase 3A-A (1331 aa).

Disordered regions lie at residues 243–280 (LNDK…PSKD), 358–381 (TPPQ…TQNL), and 497–532 (KVVK…VTYP). Over residues 266 to 280 (TELKQTRNEEVPSKD) the composition is skewed to basic and acidic residues. The C6-type zinc finger occupies 683–708 (CDACDTTIFNLHWVCPKCGFGVCVDC). The LXXLL motif motif lies at 894-898 (LRNLL). The JmjC domain occupies 1086–1291 (RREGKLNLAA…HCFWLTQEFR (206 aa)). 3 residues coordinate Fe cation: His-1130, Asp-1132, and His-1259.

The protein belongs to the JHDM2 histone demethylase family. Fe(2+) is required as a cofactor.

Its subcellular location is the cytoplasm. The protein localises to the nucleus. It carries out the reaction N(6),N(6)-dimethyl-L-lysyl(9)-[histone H3] + 2 2-oxoglutarate + 2 O2 = L-lysyl(9)-[histone H3] + 2 formaldehyde + 2 succinate + 2 CO2. In terms of biological role, histone demethylase that specifically demethylates 'Lys-9' of histone H3, thereby playing a central role in histone code. Preferentially demethylates mono- and dimethylated H3 'Lys-9' residue, with a preference for dimethylated residue, while it has weak or no activity on trimethylated H3 'Lys-9'. Demethylation of Lys residue generates formaldehyde and succinate. The polypeptide is Lysine-specific demethylase 3A-A (kdm3a-a) (Xenopus laevis (African clawed frog)).